We begin with the raw amino-acid sequence, 196 residues long: Small ribosomal subunit protein uS4c (196 aa).

The tract at residues 15 to 41 is disordered; that stretch reads LGALPGLTSKRPRSGSDLKNPLRSGKR. Residues 89–150 form the S4 RNA-binding domain; it reads MRLDNILFRL…KQRSKALIQN (62 aa).

This sequence belongs to the universal ribosomal protein uS4 family. In terms of assembly, part of the 30S ribosomal subunit. Contacts protein S5. The interaction surface between S4 and S5 is involved in control of translational fidelity.

It is found in the plastid. The protein resides in the chloroplast. In terms of biological role, one of the primary rRNA binding proteins, it binds directly to 16S rRNA where it nucleates assembly of the body of the 30S subunit. Functionally, with S5 and S12 plays an important role in translational accuracy. The protein is Small ribosomal subunit protein uS4c (rps4) of Narcissus odorus (Campernelle jonquil).